The primary structure comprises 153 residues: Transcriptional regulator MraZ (153 aa).

SpoVT-AbrB domains are found at residues 7-61 (KEKH…LPDV) and 90-133 (LEMV…EPGR).

Belongs to the MraZ family. In terms of assembly, forms oligomers.

It is found in the cytoplasm. Its subcellular location is the nucleoid. This chain is Transcriptional regulator MraZ, found in Chlorobium luteolum (strain DSM 273 / BCRC 81028 / 2530) (Pelodictyon luteolum).